Consider the following 349-residue polypeptide: Fe(3+) ions import ATP-binding protein FbpC (349 aa).

The ABC transporter domain occupies 7–237 (LVLKNVTKAF…PNSLFLANFM (231 aa)). Residue 39–46 (GPSGCGKT) participates in ATP binding.

It belongs to the ABC transporter superfamily. Fe(3+) ion importer (TC 3.A.1.10) family. As to quaternary structure, the complex is composed of two ATP-binding proteins (FbpC), two transmembrane proteins (FbpB) and a solute-binding protein (FbpA).

It localises to the cell inner membrane. The catalysed reaction is Fe(3+)(out) + ATP + H2O = Fe(3+)(in) + ADP + phosphate + H(+). Part of the ABC transporter complex FbpABC involved in Fe(3+) ions import. Responsible for energy coupling to the transport system. The polypeptide is Fe(3+) ions import ATP-binding protein FbpC (Pasteurella multocida (strain Pm70)).